A 679-amino-acid polypeptide reads, in one-letter code: Glycine--tRNA ligase beta subunit (679 aa).

The protein belongs to the class-II aminoacyl-tRNA synthetase family. As to quaternary structure, tetramer of two alpha and two beta subunits.

The protein resides in the cytoplasm. It catalyses the reaction tRNA(Gly) + glycine + ATP = glycyl-tRNA(Gly) + AMP + diphosphate. The polypeptide is Glycine--tRNA ligase beta subunit (Streptococcus pyogenes serotype M28 (strain MGAS6180)).